The chain runs to 910 residues: E3 ubiquitin-protein ligase HUL5 (910 aa).

An N-acetylmethionine modification is found at Met-1. The disordered stretch occupies residues 1 to 25 (MLNFTGQTRRRNVNLGNRTRNSKKD). An HECT domain is found at 810-910 (YGGYKEEDQT…INSGARFDLS (101 aa)). Catalysis depends on Cys-878, which acts as the Glycyl thioester intermediate.

It belongs to the UBE3C family. In terms of assembly, interacts with 19S proteasomes.

Its subcellular location is the cytoplasm. The protein localises to the cytosol. It localises to the nucleus. It catalyses the reaction S-ubiquitinyl-[E2 ubiquitin-conjugating enzyme]-L-cysteine + [acceptor protein]-L-lysine = [E2 ubiquitin-conjugating enzyme]-L-cysteine + N(6)-ubiquitinyl-[acceptor protein]-L-lysine.. The protein operates within protein modification; protein ubiquitination. Functionally, non-essential E3 ubiquitin-protein ligase that specifically catalyzes 'Lys-29'- and 'Lys-48'-linked polyubiquitin chains. Accepts ubiquitin from an E2 ubiquitin-conjugating enzyme in the form of a thioester and then directly transfers the ubiquitin to targeted substrates. Associates with the proteasome and promotes elongation of ubiquitin chains on substrates bound to the proteasome. Elongation of ubiquitin chains on substrates bound to the proteasome promotes proteasomal processivity. Also promotes ubiquitin elongation of 26S proteasome subunit RPN10. Involved in the stress response required to maintain cell fitness following heat-shock: acts by mediating ubiquitination of cytosolic misfolded proteins, leading to their subsequent degradation. In Saccharomyces cerevisiae (strain ATCC 204508 / S288c) (Baker's yeast), this protein is E3 ubiquitin-protein ligase HUL5.